The following is a 640-amino-acid chain: PAN2-PAN3 deadenylation complex subunit PAN3 (640 aa).

The segment at 17-46 (ENKDILCRNVLIYGHCRYEDQGCTYNHDQN) adopts a C3H1-type zinc-finger fold. Composition is skewed to polar residues over residues 43–53 (HDQNKNSSQPE) and 63–87 (DSPSFTPSGQSTVLPKKTTLSSQAA). The segment at 43–101 (HDQNKNSSQPEAPSKKMFNVDSPSFTPSGQSTVLPKKTTLSSQAASAAPFTPRGGGTPT) is disordered. The segment at 237 to 498 (QVIPNSGLPQ…TIEHFMTGIA (262 aa)) is pseudokinase domain. ATP contacts are provided by residues N263, R288, 338-345 (DFHPLSKT), and 397-398 (SK). The stretch at 499–537 (SQMTTFFDLALQDNDEKLFHLAREVENGRIARSLMKLLT) forms a coiled coil. The interval 538–640 (ILERGDYDGV…SKTGAPGANT (103 aa)) is knob domain.

This sequence belongs to the protein kinase superfamily. PAN3 family. As to quaternary structure, homodimer. Forms a heterotrimer with a catalytic subunit PAN2 to form the poly(A)-nuclease (PAN) deadenylation complex. Interacts (via PAM-2 motif) with poly(A)-binding protein PAB1 (via PABC domain), conferring substrate specificity of the enzyme complex.

It localises to the cytoplasm. Its function is as follows. Regulatory subunit of the poly(A)-nuclease (PAN) deadenylation complex, one of two cytoplasmic mRNA deadenylases involved in mRNA turnover. PAN specifically shortens poly(A) tails of RNA and the activity is stimulated by poly(A)-binding protein PAB1. PAN deadenylation is followed by rapid degradation of the shortened mRNA tails by the CCR4-NOT complex. Deadenylated mRNAs are then degraded by two alternative mechanisms, namely exosome-mediated 3'-5' exonucleolytic degradation, or deadenylation-dependent mRNA decaping and subsequent 5'-3' exonucleolytic degradation by XRN1. May also be involved in post-transcriptional maturation of mRNA poly(A) tails. PAN3 acts as a positive regulator for PAN activity, recruiting the catalytic subunit PAN2 to mRNA via its interaction with RNA and with PAB1. The sequence is that of PAN2-PAN3 deadenylation complex subunit PAN3 from Chaetomium thermophilum (strain DSM 1495 / CBS 144.50 / IMI 039719) (Thermochaetoides thermophila).